Reading from the N-terminus, the 514-residue chain is Deoxynucleoside triphosphate triphosphohydrolase SAMHD1 homolog (514 aa).

The tract at residues 1–24 (MNNTFKYVNEDVSGTEGEESDYDP) is disordered. Lys-80 serves as a coordination point for GTP. Residue Asn-83 coordinates a 2'-deoxyribonucleoside 5'-triphosphate. GTP is bound at residue 101 to 109 (DTEQFQRLR). 2 residues coordinate substrate: Gln-113 and Arg-128. Residues 128–259 (RFEHSIGVSH…SVDVDKFDYL (132 aa)) enclose the HD domain. Zn(2+) is bound by residues His-131, His-170, and Asp-171. His-174 is a binding site for substrate. The active site involves His-196. Residues 252 to 258 (DVDKFDY), Tyr-258, and Asp-262 contribute to the substrate site. A Zn(2+)-binding site is contributed by Asp-254. A 2'-deoxyribonucleoside 5'-triphosphate is bound by residues Arg-276, 291–293 (LSK), and Asn-297. Substrate contacts are provided by residues Arg-305 and 309-314 (HKLVYT). Residues His-315 and Lys-316 each coordinate a 2'-deoxyribonucleoside 5'-triphosphate. Residues Arg-380 and Lys-384 each coordinate GTP.

It belongs to the SAMHD1 family. Homodimer; in absence of GTP and dNTP. Homotetramer; in GTP- and dNTP-bound form. The cofactor is Zn(2+).

The catalysed reaction is a 2'-deoxyribonucleoside 5'-triphosphate + H2O = a 2'-deoxyribonucleoside + triphosphate + H(+). With respect to regulation, allosterically activated and regulated via the combined actions of GTP and dNTPs (dATP, dGTP, dTTP and dCTP): Allosteric site 1 binds GTP, while allosteric site 2 binds dNTP. Allosteric activation promotes the formation of highly active homotetramers. Functionally, has deoxynucleoside triphosphate (dNTPase) activity. In Dictyostelium discoideum (Social amoeba), this protein is Deoxynucleoside triphosphate triphosphohydrolase SAMHD1 homolog.